The chain runs to 427 residues: Trigger factor (427 aa).

The PPIase FKBP-type domain maps to 163 to 248 (GDTVVIDFVG…VNEVKAKELP (86 aa)).

The protein belongs to the FKBP-type PPIase family. Tig subfamily.

It localises to the cytoplasm. It carries out the reaction [protein]-peptidylproline (omega=180) = [protein]-peptidylproline (omega=0). Its function is as follows. Involved in protein export. Acts as a chaperone by maintaining the newly synthesized protein in an open conformation. Functions as a peptidyl-prolyl cis-trans isomerase. The sequence is that of Trigger factor (tig) from Lactococcus lactis subsp. lactis (strain IL1403) (Streptococcus lactis).